Consider the following 571-residue polypeptide: Transcription factor ABORTED MICROSPORES (571 aa).

The segment covering 275-284 (NDKDMNENGR) has biased composition (basic and acidic residues). 3 disordered regions span residues 275 to 321 (NDKD…AERR), 365 to 390 (ELQD…MSLN), and 536 to 571 (DDHQ…YHNQ). In terms of domain architecture, bHLH spans 310 to 359 (GSQAKNLMAERRRRKKLNDRLYALRSLVPRITKLDRASILGDAINYVKEL). The span at 368–378 (DELEENSETED) shows a compositional bias: acidic residues. Residues 381–390 (NRPQGGMSLN) show a composition bias toward polar residues. The span at 556 to 571 (AHHHHHHQHINHYHNQ) shows a compositional bias: basic residues.

As to quaternary structure, homodimer. Interacts with ASHR3. As to expression, mostly expressed in closed, post-meiotic buds, and, to a lower extent, in pre-meiotic buds. Detected in leaves, stems, and flowers.

The protein resides in the nucleus. Transcription factor. Plays a crucial role in tapetum development. Required for male fertility and pollen differentiation, especially during the post-meiotic transcriptional regulation of microspore development within the developing anther. Binds E-box regions in the AHL16/TEK promoter. The sequence is that of Transcription factor ABORTED MICROSPORES (AMS) from Arabidopsis thaliana (Mouse-ear cress).